Consider the following 570-residue polypeptide: Adenine deaminase (570 aa).

Belongs to the metallo-dependent hydrolases superfamily. Adenine deaminase family. Mn(2+) is required as a cofactor.

The enzyme catalyses adenine + H2O + H(+) = hypoxanthine + NH4(+). This is Adenine deaminase from Clostridium acetobutylicum (strain ATCC 824 / DSM 792 / JCM 1419 / IAM 19013 / LMG 5710 / NBRC 13948 / NRRL B-527 / VKM B-1787 / 2291 / W).